A 124-amino-acid chain; its full sequence is Small ribosomal subunit protein eS6 (124 aa).

The protein belongs to the eukaryotic ribosomal protein eS6 family.

In Methanococcus maripaludis (strain C5 / ATCC BAA-1333), this protein is Small ribosomal subunit protein eS6.